We begin with the raw amino-acid sequence, 130 residues long: Histone H2A.1 (130 aa).

The segment at 1 to 21 (MSGGKGKVGSSEKASTSRSAK) is disordered. Ser-2 carries the post-translational modification N-acetylserine. 2 positions are modified to N6-acetyllysine: Lys-5 and Lys-7. Gln-105 bears the N5-methylglutamine mark. Phosphoserine is present on Ser-127. Residues 127-128 (SQ) carry the [ST]-Q motif motif.

Belongs to the histone H2A family. As to quaternary structure, the nucleosome is a histone octamer containing two molecules each of H2A, H2B, H3 and H4 assembled in one H3-H4 heterotetramer and two H2A-H2B heterodimers. The octamer wraps approximately 147 bp of DNA. In terms of processing, phosphorylated to form H2AS128ph (gamma-H2A) in response to DNA double-strand breaks (DSBs) generated by exogenous genotoxic agents and by stalled replication forks. Phosphorylation is dependent on the DNA damage checkpoint kinases MEC1/ATR and TEL1/ATM, spreads on either side of a detected DSB site and may mark the surrounding chromatin for recruitment of proteins required for DNA damage signaling and repair. Gamma-H2A is removed from the DNA prior to the strand invasion-primer extension step of the repair process and subsequently dephosphorylated. Dephosphorylation is necessary for efficient recovery from the DNA damage checkpoint. Acetylated by ESA1 to form H2AK4ac and H2AK7ac.

The protein resides in the nucleus. The protein localises to the chromosome. Functionally, core component of nucleosome which plays a central role in DNA double strand break (DSB) repair. Nucleosomes wrap and compact DNA into chromatin, limiting DNA accessibility to the cellular machineries which require DNA as a template. Histones thereby play a central role in transcription regulation, DNA repair, DNA replication and chromosomal stability. DNA accessibility is regulated via a complex set of post-translational modifications of histones, also called histone code, and nucleosome remodeling. The protein is Histone H2A.1 (HTA1) of Meyerozyma guilliermondii (strain ATCC 6260 / CBS 566 / DSM 6381 / JCM 1539 / NBRC 10279 / NRRL Y-324) (Yeast).